Reading from the N-terminus, the 224-residue chain is Ribonuclease 3 (224 aa).

In terms of domain architecture, RNase III spans 4–126 (LDRLQHKIGY…IIGAMSLDSN (123 aa)). Glu39 lines the Mg(2+) pocket. Residue Asp43 is part of the active site. Asp112 and Glu115 together coordinate Mg(2+). Residue Glu115 is part of the active site. Residues 153–223 (DPKTRLQEYL…AEQILKVLDI (71 aa)) form the DRBM domain.

Belongs to the ribonuclease III family. In terms of assembly, homodimer. The cofactor is Mg(2+).

It localises to the cytoplasm. It carries out the reaction Endonucleolytic cleavage to 5'-phosphomonoester.. Functionally, digests double-stranded RNA. Involved in the processing of primary rRNA transcript to yield the immediate precursors to the large and small rRNAs (23S and 16S). Processes some mRNAs, and tRNAs when they are encoded in the rRNA operon. Processes pre-crRNA and tracrRNA of type II CRISPR loci if present in the organism. The chain is Ribonuclease 3 from Actinobacillus succinogenes (strain ATCC 55618 / DSM 22257 / CCUG 43843 / 130Z).